The following is a 293-amino-acid chain: Probable endonuclease 4 (293 aa).

Zn(2+) contacts are provided by H75, H115, E153, D187, H190, H224, D237, H239, and E269.

The protein belongs to the AP endonuclease 2 family. It depends on Zn(2+) as a cofactor.

The enzyme catalyses Endonucleolytic cleavage to 5'-phosphooligonucleotide end-products.. Functionally, endonuclease IV plays a role in DNA repair. It cleaves phosphodiester bonds at apurinic or apyrimidinic (AP) sites, generating a 3'-hydroxyl group and a 5'-terminal sugar phosphate. The chain is Probable endonuclease 4 from Chlamydia pneumoniae (Chlamydophila pneumoniae).